We begin with the raw amino-acid sequence, 207 residues long: 8-oxoguanine DNA glycosylase/AP lyase (207 aa).

Residues K129 and D147 contribute to the active site.

The protein belongs to the type-2 OGG1 family.

The enzyme catalyses 2'-deoxyribonucleotide-(2'-deoxyribose 5'-phosphate)-2'-deoxyribonucleotide-DNA = a 3'-end 2'-deoxyribonucleotide-(2,3-dehydro-2,3-deoxyribose 5'-phosphate)-DNA + a 5'-end 5'-phospho-2'-deoxyribonucleoside-DNA + H(+). Its function is as follows. Catalyzes the excision of an oxidatively damaged form of guanine (7,8-dihydro-8-oxoguanine = 8-oxoG) from DNA. Also cleaves the DNA backbone at apurinic/apyrimidinic sites (AP sites). Has little specificity for the base opposite oxoG. The chain is 8-oxoguanine DNA glycosylase/AP lyase from Methanocaldococcus jannaschii (strain ATCC 43067 / DSM 2661 / JAL-1 / JCM 10045 / NBRC 100440) (Methanococcus jannaschii).